The chain runs to 289 residues: Shikimate dehydrogenase (NADP(+)) (289 aa).

Residues 22–24 (SRS) and Thr69 each bind shikimate. Lys73 (proton acceptor) is an active-site residue. Glu85 provides a ligand contact to NADP(+). 2 residues coordinate shikimate: Asn94 and Asp109. NADP(+) contacts are provided by residues 134 to 138 (GAGGA), 158 to 163 (NRTLSR), and Ile226. Tyr228 lines the shikimate pocket. NADP(+) is bound at residue Gly249.

Belongs to the shikimate dehydrogenase family. As to quaternary structure, homodimer.

The catalysed reaction is shikimate + NADP(+) = 3-dehydroshikimate + NADPH + H(+). Its pathway is metabolic intermediate biosynthesis; chorismate biosynthesis; chorismate from D-erythrose 4-phosphate and phosphoenolpyruvate: step 4/7. Involved in the biosynthesis of the chorismate, which leads to the biosynthesis of aromatic amino acids. Catalyzes the reversible NADPH linked reduction of 3-dehydroshikimate (DHSA) to yield shikimate (SA). This Brucella melitensis biotype 2 (strain ATCC 23457) protein is Shikimate dehydrogenase (NADP(+)).